The following is a 413-amino-acid chain: Porin PorA (413 aa).

The first 22 residues, 1–22, serve as a signal peptide directing secretion; sequence MKKVVSSLLIILGAAMLIFAIA. The tract at residues 265 to 288 is disordered; sequence TKSAADSKDDKKKDGDKKDEKSPE.

It belongs to the PorA family.

The protein resides in the secreted. It is found in the cell wall. Forms water-filled channels that favor the permeation of cations. This chain is Porin PorA, found in Corynebacterium resistens (strain DSM 45100 / JCM 12819 / GTC 2026 / SICGH 158).